We begin with the raw amino-acid sequence, 414 residues long: Gamma-glutamyl phosphate reductase (414 aa).

It belongs to the gamma-glutamyl phosphate reductase family.

The protein localises to the cytoplasm. The catalysed reaction is L-glutamate 5-semialdehyde + phosphate + NADP(+) = L-glutamyl 5-phosphate + NADPH + H(+). It functions in the pathway amino-acid biosynthesis; L-proline biosynthesis; L-glutamate 5-semialdehyde from L-glutamate: step 2/2. Catalyzes the NADPH-dependent reduction of L-glutamate 5-phosphate into L-glutamate 5-semialdehyde and phosphate. The product spontaneously undergoes cyclization to form 1-pyrroline-5-carboxylate. In Clostridium botulinum (strain Eklund 17B / Type B), this protein is Gamma-glutamyl phosphate reductase.